The sequence spans 124 residues: Small ribosomal subunit protein uS12 (124 aa).

The disordered stretch occupies residues 1–32 (MPTISQLIRHGRQKQKKRTKSPALKSSPQRRG). Over residues 9-20 (RHGRQKQKKRTK) the composition is skewed to basic residues. Aspartate 89 carries the post-translational modification 3-methylthioaspartic acid.

This sequence belongs to the universal ribosomal protein uS12 family. As to quaternary structure, part of the 30S ribosomal subunit. Contacts proteins S8 and S17. May interact with IF1 in the 30S initiation complex.

Its function is as follows. With S4 and S5 plays an important role in translational accuracy. Functionally, interacts with and stabilizes bases of the 16S rRNA that are involved in tRNA selection in the A site and with the mRNA backbone. Located at the interface of the 30S and 50S subunits, it traverses the body of the 30S subunit contacting proteins on the other side and probably holding the rRNA structure together. The combined cluster of proteins S8, S12 and S17 appears to hold together the shoulder and platform of the 30S subunit. The protein is Small ribosomal subunit protein uS12 of Leptospira borgpetersenii serovar Hardjo-bovis (strain JB197).